Reading from the N-terminus, the 476-residue chain is Protein PAL OF QUIRKY (476 aa).

The first 14 residues, Met1–Gly14, serve as a signal peptide directing secretion. The disordered stretch occupies residues Thr204–Asp256. Over residues Ser212 to Cys222 the composition is skewed to gly residues. The span at Ser233–Ser252 shows a compositional bias: low complexity.

As to quaternary structure, homodimer. Interacts with QKY and SUB/SCM at the plasma membrane. In terms of tissue distribution, observed in seedlings, roots, shoots, leaves, stems, inflorescence and flowers.

The protein resides in the cell membrane. It is found in the endomembrane system. Collaboratively with SUB and QKY, regulates cell growth anisotropy during gynoecium development, thus linking together cell-cell communication and cellular growth. The protein is Protein PAL OF QUIRKY of Arabidopsis thaliana (Mouse-ear cress).